The chain runs to 597 residues: MRTHYCGDVRSHDVGTTVTLFGWVDRRRDHGGVIFLDLRDRSGVVQIVSDPERTPNSYAKAEQLRNEYVVKVTGRVSARPEESLNPRLPTGEVEIYADQIELLNAVRKQLPFQVSTTESESVREDLRLKYRYLDLRRETMAANLQLRHQVVKAMRRYLEDEQNFVEIETPVLTRSTPEGARDYLVPSRVNPGEWFALPQSPQLFKQLLMVAGYDRYYQIARCFRDEDLRADRQPEFTQLDMEMSFMSQEEILELNEALVCHIFKQVKGIELPRPFPRLTYAEAMDRYGSDKPDTRFGLELVNVSDLMKDSGFKVFSGAVASGGLVKVLPIPNGNDLISNVRIKPGGDLFKEATDAGAKGLAYIRVREGGEIDTIGAIKDNLTEAQKAELLQRTGAKPGHLLLFGAGTAAIVNKTLDRLRQVLGRELNLIDPAKINLLWIVEFPMFEWNADEKRLEALHHPFTAPYPEDVQDLKTAQAQAYDLVYNGFEVGGGSLRIYQTELQKQVFETIGLSPEEAQNKFGFLLEAFEYGTPPHGGIAYGLDRLVMLLAGEESIRDVIAFPKTQQARCLLTSAPAEVDLRQLKELHVASTSQPKVNG.

L-aspartate is bound at residue Glu178. The tract at residues 202–205 (QLFK) is aspartate. Arg224 is a binding site for L-aspartate. Residues 224 to 226 (RDE) and Gln233 contribute to the ATP site. Residue His458 participates in L-aspartate binding. ATP is bound at residue Glu488. Residue Arg495 participates in L-aspartate binding. 540 to 543 (GLDR) contacts ATP.

It belongs to the class-II aminoacyl-tRNA synthetase family. Type 1 subfamily. Homodimer.

It is found in the cytoplasm. The enzyme catalyses tRNA(Asx) + L-aspartate + ATP = L-aspartyl-tRNA(Asx) + AMP + diphosphate. Its function is as follows. Aspartyl-tRNA synthetase with relaxed tRNA specificity since it is able to aspartylate not only its cognate tRNA(Asp) but also tRNA(Asn). Reaction proceeds in two steps: L-aspartate is first activated by ATP to form Asp-AMP and then transferred to the acceptor end of tRNA(Asp/Asn). This chain is Aspartate--tRNA(Asp/Asn) ligase, found in Cyanothece sp. (strain PCC 7425 / ATCC 29141).